A 468-amino-acid polypeptide reads, in one-letter code: Pancreatic lipase-related protein 2 (468 aa).

The signal sequence occupies residues 1–16 (MLLCWIVSLLLATVGG). Cys-20 and Cys-26 are oxidised to a cystine. The interval 92-104 (VHGFIDKGEDGWL) is required for galactolipase activity. Cysteines 108 and 119 form a disulfide. The active-site Nucleophile is the Ser-170. Asp-194 functions as the Charge relay system in the catalytic mechanism. Residues Glu-205, Arg-208, Asp-210, and Asp-213 each coordinate Ca(2+). Cysteines 255 and 279 form a disulfide. A required for galactolipase activity region spans residues 256-278 (QKNILSTIVDINGIWEGTQNFVA). His-281 functions as the Charge relay system in the catalytic mechanism. 2 cysteine pairs are disulfide-bonded: Cys-303–Cys-314 and Cys-317–Cys-322. 2 N-linked (GlcNAc...) asparagine glycosylation sites follow: Asn-352 and Asn-427. Residues 356–468 (WRYKVSVTLS…EDVLQSLYPC (113 aa)) form the PLAT domain. An intrachain disulfide couples Cys-452 to Cys-468.

It belongs to the AB hydrolase superfamily. Lipase family. Expressed in pancreatic acinar cells (at protein level).

The protein resides in the secreted. It is found in the zymogen granule membrane. Its subcellular location is the cell projection. It localises to the neuron projection. The catalysed reaction is a triacylglycerol + H2O = a diacylglycerol + a fatty acid + H(+). The enzyme catalyses a 1,2-diacyl-3-O-(beta-D-galactosyl)-sn-glycerol + 2 H2O = 3-beta-D-galactosyl-sn-glycerol + 2 a fatty acid + 2 H(+). It carries out the reaction 1,2,3-tri-(9Z-octadecenoyl)-glycerol + H2O = di-(9Z)-octadecenoylglycerol + (9Z)-octadecenoate + H(+). It catalyses the reaction di-(9Z)-octadecenoylglycerol + H2O = (9Z-octadecenoyl)-glycerol + (9Z)-octadecenoate + H(+). The catalysed reaction is (9Z-octadecenoyl)-glycerol + H2O = glycerol + (9Z)-octadecenoate + H(+). The enzyme catalyses 1-(9Z-octadecenoyl)-glycerol + H2O = glycerol + (9Z)-octadecenoate + H(+). It carries out the reaction 1,2,3-tripropanoylglycerol + H2O = dipropanoylglycerol + propanoate + H(+). It catalyses the reaction 1,2,3-tributanoylglycerol + H2O = dibutanoylglycerol + butanoate + H(+). The catalysed reaction is 1,2,3-trioctanoylglycerol + H2O = dioctanoylglycerol + octanoate + H(+). The enzyme catalyses 1,2-didecanoylglycerol + H2O = decanoylglycerol + decanoate + H(+). It carries out the reaction long chain 1,2-diacyl-3-O-beta-D-galactosyl-sn-glycerol + H2O = long chain acyl-3-O-beta-D-galactosyl-sn-glycerol + a fatty acid + H(+). It catalyses the reaction 1,2-dioctanoyl-3-O-beta-D-galactosyl-sn-glycerol + H2O = octanoyl-3-(beta-D-galactosyl)-sn-glycerol + octanoate + H(+). The catalysed reaction is 1,2-didodecanoyl-3-beta-D-galactosyl-sn-glycerol + H2O = dodecanoyl-3-beta-D-galactosyl-sn-glycerol + dodecanoate + H(+). The enzyme catalyses 1-beta-D-galactosyl-2,3-didodecanoyl-sn-glycerol + H2O = 1-beta-D-galactosyl-dodecanoyl-sn-glycerol + dodecanoate + H(+). It carries out the reaction a 1,2-diacyl-3-O-[alpha-D-galactosyl-(1-&gt;6)-beta-D-galactosyl]-sn-glycerol + H2O = acyl-3-O-[alpha-D-galactosyl-(1-&gt;6)-beta-D-galactosyl]-sn-glycerol + a fatty acid + H(+). It catalyses the reaction long chain 1,2-diacyl-3-O-[alpha-D-galactosyl-(1-&gt;6)-beta-D-galactosyl]-sn-glycerol + H2O = long chain acyl-3-O-[alpha-D-galactosyl-(1-&gt;6)-beta-D-galactosyl]-sn-glycerol + a fatty acid + H(+). The catalysed reaction is 1,2-dioctanoyl-3-O-[alpha-D-galactosyl-(1-&gt;6)-beta-D-galactosyl]-sn-glycerol + H2O = octanoyl-3-O-[alpha-D-galactosyl-(1-&gt;6)-beta-D-galactosyl]-sn-glycerol + octanoate + H(+). The enzyme catalyses 1,2-didodecanoyl-3-O-[alpha-D-galactosyl-(1-&gt;6)-beta-D-galactosyl]-sn-glycerol + H2O = dodecanoyl-3-O-[alpha-D-galactosyl-(1-&gt;6)-beta-D-galactosyl]-sn-glycerol + dodecanoate + H(+). It carries out the reaction a 1,2-diacyl-sn-glycero-3-phosphocholine + H2O = a monoacyl-sn-glycero-3-phosphocholine + a fatty acid + H(+). Its pathway is glycerolipid metabolism; triacylglycerol degradation. It functions in the pathway glycolipid metabolism. Its activity is regulated as follows. CLPS stimulates triacylglycerol lipase activity. Triacylglycerol lipase activity is not inhibited by increasing bile salt concentration. Lipase that primarily hydrolyzes triglycerides and galactosylglycerides. In neonates, may play a major role in pancreatic digestion of dietary fats such as milk fat globules enriched in long-chain triglycerides. Hydrolyzes short-, medium- and long-chain fatty acyls in triglycerides without apparent positional specificity. Can completely deacylate triacylglycerols. When the liver matures and bile salt synthesis increases, likely functions mainly as a galactolipase and monoacylglycerol lipase. Hydrolyzes monogalactosyldiglycerols (MGDG) and digalactosyldiacylglycerols (DGDG) present in a plant-based diet, releasing long-chain polyunsaturated fatty acids. Hydrolyzes medium- and long-chain fatty acyls in galactolipids. May act together with LIPF to hydrolyze partially digested triglycerides. Hydrolyzes long-chain monoglycerides with high efficiency. In cytotoxic T cells, contributes to perforin-dependent cell lysis, but is unlikely to mediate direct cytotoxicity. Also has low phospholipase activity. In neurons, required for the localization of the phospholipid 1-oleoyl-2-palmitoyl-PC (OPPC) to neurite tips through acyl chain remodeling of membrane phospholipids. The resulting OPPC-rich lipid membrane domain recruits the t-SNARE protein STX4 by selectively interacting with the STX4 transmembrane domain and this promotes surface expression of the dopamine transporter SLC6A3/DAT at neurite tips by facilitating fusion of SLC6A3-containing transport vesicles with the plasma membrane. This is Pancreatic lipase-related protein 2 from Rattus norvegicus (Rat).